We begin with the raw amino-acid sequence, 312 residues long: 2,3-dihydroxyphenylpropionate/2,3-dihydroxicinnamic acid 1,2-dioxygenase (312 aa).

The active-site Proton donor is His115. Residue His179 is the Proton acceptor of the active site.

The protein belongs to the LigB/MhpB extradiol dioxygenase family. As to quaternary structure, homotetramer. The cofactor is Fe(2+).

The catalysed reaction is 3-(2,3-dihydroxyphenyl)propanoate + O2 = (2Z,4E)-2-hydroxy-6-oxonona-2,4-dienedioate + H(+). The enzyme catalyses (2E)-3-(2,3-dihydroxyphenyl)prop-2-enoate + O2 = (2Z,4E,7E)-2-hydroxy-6-oxonona-2,4,7-trienedioate + H(+). The protein operates within aromatic compound metabolism; 3-phenylpropanoate degradation. Its function is as follows. Catalyzes the non-heme iron(II)-dependent oxidative cleavage of 2,3-dihydroxyphenylpropionic acid and 2,3-dihydroxicinnamic acid into 2-hydroxy-6-ketononadienedioate and 2-hydroxy-6-ketononatrienedioate, respectively. This Azotobacter vinelandii (strain DJ / ATCC BAA-1303) protein is 2,3-dihydroxyphenylpropionate/2,3-dihydroxicinnamic acid 1,2-dioxygenase.